A 165-amino-acid polypeptide reads, in one-letter code: MPAESTFDIVSDFDRQELINAVDQARREVATRYDLKDTKTEIVLSEKELTITTESEMHLTAVRDLIQTRALRRNLSIKIFKFGPIQEVSGGRVRQVALLQRGIPEDVAKKLAKLIRDHFPKVQPRIQGDVLRVGSKSRDELQAVIRLVKEHQDEFAIPLQFTNYR.

It belongs to the YajQ family.

In terms of biological role, nucleotide-binding protein. The protein is Nucleotide-binding protein RoseRS_0530 of Roseiflexus sp. (strain RS-1).